The primary structure comprises 652 residues: Acetyl-coenzyme A synthetase (652 aa).

Residues arginine 191–arginine 194, threonine 311, and asparagine 335 contribute to the CoA site. ATP contacts are provided by residues glycine 387–proline 389, aspartate 411–threonine 416, aspartate 500, and arginine 515. Serine 523 serves as a coordination point for CoA. Arginine 526 serves as a coordination point for ATP. Mg(2+)-binding residues include valine 537, histidine 539, and isoleucine 542. Residue arginine 584 coordinates CoA. Lysine 609 carries the post-translational modification N6-acetyllysine.

It belongs to the ATP-dependent AMP-binding enzyme family. Requires Mg(2+) as cofactor. In terms of processing, acetylated. Deacetylation by the SIR2-homolog deacetylase activates the enzyme.

The enzyme catalyses acetate + ATP + CoA = acetyl-CoA + AMP + diphosphate. Its function is as follows. Catalyzes the conversion of acetate into acetyl-CoA (AcCoA), an essential intermediate at the junction of anabolic and catabolic pathways. Acs undergoes a two-step reaction. In the first half reaction, Acs combines acetate with ATP to form acetyl-adenylate (AcAMP) intermediate. In the second half reaction, it can then transfer the acetyl group from AcAMP to the sulfhydryl group of CoA, forming the product AcCoA. In terms of biological role, enables the cell to use acetate during aerobic growth to generate energy via the TCA cycle, and biosynthetic compounds via the glyoxylate shunt. Acetylates CheY, the response regulator involved in flagellar movement and chemotaxis. This chain is Acetyl-coenzyme A synthetase, found in Yersinia pseudotuberculosis serotype I (strain IP32953).